The chain runs to 319 residues: Methionyl-tRNA formyltransferase (319 aa).

Position 113–116 (113–116) interacts with (6S)-5,6,7,8-tetrahydrofolate; the sequence is SLLP.

Belongs to the Fmt family.

The catalysed reaction is L-methionyl-tRNA(fMet) + (6R)-10-formyltetrahydrofolate = N-formyl-L-methionyl-tRNA(fMet) + (6S)-5,6,7,8-tetrahydrofolate + H(+). Its function is as follows. Attaches a formyl group to the free amino group of methionyl-tRNA(fMet). The formyl group appears to play a dual role in the initiator identity of N-formylmethionyl-tRNA by promoting its recognition by IF2 and preventing the misappropriation of this tRNA by the elongation apparatus. This is Methionyl-tRNA formyltransferase from Hamiltonella defensa subsp. Acyrthosiphon pisum (strain 5AT).